A 1148-amino-acid polypeptide reads, in one-letter code: Phospholipid-transporting ATPase IB (1148 aa).

Topologically, residues 1 to 44 are cytoplasmic; it reads MSRATSVGDQLEAPARIIYLNQSHLNKFCDNRISTAKYSVLTFL. The residue at position 5 (Thr5) is a Phosphothreonine. The helical transmembrane segment at 45 to 66 threads the bilayer; sequence PRFLYEQIRRAANAFFLFIALL. At 67-71 the chain is on the exoplasmic loop side; that stretch reads QQIPD. Residues 72–94 traverse the membrane as a helical segment; the sequence is VSPTGRYTTLVPLVIILTIAGIK. Topologically, residues 95 to 276 are cytoplasmic; the sequence is EIIEDFKRHK…SNVEKVTNVQ (182 aa). A helical transmembrane segment spans residues 277–298; that stretch reads ILVLFGILLVMALVSSVGALFW. The Exoplasmic loop portion of the chain corresponds to 299–323; the sequence is NGSHGGKSWYIKKMDTNSDNFGYNL. A helical transmembrane segment spans residues 324–345; it reads LTFIILYNNLIPISLLVTLEVV. Residues 346-837 lie on the Cytoplasmic side of the membrane; the sequence is KYTQALFINW…GAWSYNRVTK (492 aa). Residue Asp388 is the 4-aspartylphosphate intermediate of the active site. Asp388, Lys389, Thr390, Glu488, Phe529, Lys552, Arg585, Thr665, Gly666, Asp667, Arg755, and Lys761 together coordinate ATP. Asp388 contacts Mg(2+). Thr390 lines the Mg(2+) pocket. Mg(2+) is bound at residue Asp781. Positions 784 and 785 each coordinate ATP. Asp785 is a binding site for Mg(2+). The helical transmembrane segment at 838-858 threads the bilayer; sequence CILYCFYKNVVLYIIELWFAF. The Exoplasmic loop segment spans residues 859-870; it reads VNGFSGQILFER. Residues 871–890 form a helical membrane-spanning segment; sequence WCIGLYNVIFTALPPFTLGI. At 891-920 the chain is on the cytoplasmic side; that stretch reads FERSCTQESMLRFPQLYRITQNAEGFNTKV. The chain crosses the membrane as a helical span at residues 921–942; sequence FWGHCINALVHSLILFWVPMKA. Topologically, residues 943-956 are exoplasmic loop; sequence LEHDTPVTSGHATD. Residues 957-979 traverse the membrane as a helical segment; sequence YLFVGNIVYTYVVVTVCLKAGLE. The Cytoplasmic portion of the chain corresponds to 980–985; the sequence is TTAWTK. A helical membrane pass occupies residues 986 to 1006; that stretch reads FSHLAVWGSMLIWLVFFGVYS. Over 1007–1024 the chain is Exoplasmic loop; the sequence is TIWPTIPIAPDMKGQATM. The chain crosses the membrane as a helical span at residues 1025 to 1049; the sequence is VLSSAYFWLGLFLVPTACLIEDVAW. Over 1050–1148 the chain is Cytoplasmic; that stretch reads RAAKHTCKKT…DTTKENSRKK (99 aa).

This sequence belongs to the cation transport ATPase (P-type) (TC 3.A.3) family. Type IV subfamily. In terms of assembly, component of a P4-ATPase flippase complex which consists of a catalytic alpha subunit and an accessory beta subunit. Interacts with TMEM30A to form a flippase complex. Requires Mg(2+) as cofactor. Found in testis, heart and brain. Most abundant in testis. Also detected in fetal tissues. Expressed in retinal photoreceptor cells; detected in retina outer nuclear layer and inner segment (at protein level).

The protein resides in the membrane. It localises to the golgi apparatus membrane. Its subcellular location is the endosome membrane. It is found in the cell membrane. The protein localises to the photoreceptor outer segment membrane. The protein resides in the photoreceptor inner segment membrane. It carries out the reaction ATP + H2O + phospholipidSide 1 = ADP + phosphate + phospholipidSide 2.. The catalysed reaction is a 1,2-diacyl-sn-glycero-3-phospho-L-serine(out) + ATP + H2O = a 1,2-diacyl-sn-glycero-3-phospho-L-serine(in) + ADP + phosphate + H(+). It catalyses the reaction a 1,2-diacyl-sn-glycero-3-phosphoethanolamine(in) + ATP + H2O = a 1,2-diacyl-sn-glycero-3-phosphoethanolamine(out) + ADP + phosphate + H(+). In terms of biological role, catalytic component of a P4-ATPase flippase complex which catalyzes the hydrolysis of ATP coupled to the transport of aminophospholipids from the outer to the inner leaflet of various membranes and ensures the maintenance of asymmetric distribution of phospholipids. Able to translocate phosphatidylserine, but not phosphatidylcholine. Phospholipid translocation also seems to be implicated in vesicle formation and in uptake of lipid signaling molecules. Reconstituted to liposomes, the ATP8A2:TMEM30A flippase complex predominantly transports phosphatidylserine (PS) and to a lesser extent phosphatidylethanolamine (PE). Phospholipid translocation is not associated with a countertransport of an inorganic ion or other charged substrate from the cytoplasmic side toward the exoplasm in connection with the phosphorylation from ATP. ATP8A2:TMEM30A may be involved in regulation of neurite outgrowth. Proposed to function in the generation and maintenance of phospholipid asymmetry in photoreceptor disk membranes and neuronal axon membranes. May be involved in vesicle trafficking in neuronal cells. Required for normal visual and auditory function; involved in photoreceptor and inner ear spiral ganglion cell survival. The protein is Phospholipid-transporting ATPase IB of Mus musculus (Mouse).